The primary structure comprises 314 residues: Transcriptional activator RhrA (314 aa).

Residues 210 to 310 (ASIKMRVEQN…GVRPSDLRRL (101 aa)) enclose the HTH araC/xylS-type domain. 2 DNA-binding regions (H-T-H motif) span residues 228–249 (TDVA…SREG) and 277–300 (ISQI…RSRY).

In terms of biological role, transcriptional activator of the rhizobactin regulon. This chain is Transcriptional activator RhrA (rhrA), found in Rhizobium meliloti (strain 1021) (Ensifer meliloti).